Here is a 295-residue protein sequence, read N- to C-terminus: 4-diphosphocytidyl-2-C-methyl-D-erythritol kinase (295 aa).

K18 is a catalytic residue. 101–111 (PMGGGIGGGSS) contacts ATP. Residue D143 is part of the active site.

Belongs to the GHMP kinase family. IspE subfamily.

The catalysed reaction is 4-CDP-2-C-methyl-D-erythritol + ATP = 4-CDP-2-C-methyl-D-erythritol 2-phosphate + ADP + H(+). It participates in isoprenoid biosynthesis; isopentenyl diphosphate biosynthesis via DXP pathway; isopentenyl diphosphate from 1-deoxy-D-xylulose 5-phosphate: step 3/6. Its function is as follows. Catalyzes the phosphorylation of the position 2 hydroxy group of 4-diphosphocytidyl-2C-methyl-D-erythritol. This chain is 4-diphosphocytidyl-2-C-methyl-D-erythritol kinase, found in Vibrio vulnificus (strain YJ016).